A 612-amino-acid polypeptide reads, in one-letter code: C4-dicarboxylate transport sensor protein DctB (612 aa).

2 helical membrane passes run 23–43 and 292–312; these read SLVI…YFAE and VLLI…LLTL. The stretch at 328–376 forms a coiled coil; sequence KRQLEERVLERTRELENANAQLQQEVHEREQAQRELMRAQDEVVQAGKL. Residues 385–599 enclose the Histidine kinase domain; the sequence is SISHELNQPL…VVRLHLLPGV (215 aa). Position 388 is a phosphohistidine; by autocatalysis (His388).

Post-translationally, autophosphorylated.

The protein resides in the cell inner membrane. The catalysed reaction is ATP + protein L-histidine = ADP + protein N-phospho-L-histidine.. Its function is as follows. Member of the two-component regulatory system DctB/DctD, which regulates C4-dicarboxylate transport via regulation of expression of the dctPQM operon and dctA. DctB functions as a membrane-associated protein kinase that phosphorylates DctD in response to environmental signals. The chain is C4-dicarboxylate transport sensor protein DctB from Pseudomonas aeruginosa (strain ATCC 15692 / DSM 22644 / CIP 104116 / JCM 14847 / LMG 12228 / 1C / PRS 101 / PAO1).